The following is a 382-amino-acid chain: Methylthioribose-1-phosphate isomerase (382 aa).

Asp261 serves as the catalytic Proton donor.

It belongs to the eIF-2B alpha/beta/delta subunits family. MtnA subfamily.

It localises to the cytoplasm. Its subcellular location is the nucleus. It carries out the reaction 5-(methylsulfanyl)-alpha-D-ribose 1-phosphate = 5-(methylsulfanyl)-D-ribulose 1-phosphate. Its pathway is amino-acid biosynthesis; L-methionine biosynthesis via salvage pathway; L-methionine from S-methyl-5-thio-alpha-D-ribose 1-phosphate: step 1/6. Catalyzes the interconversion of methylthioribose-1-phosphate (MTR-1-P) into methylthioribulose-1-phosphate (MTRu-1-P). The sequence is that of Methylthioribose-1-phosphate isomerase from Ricinus communis (Castor bean).